The following is a 1486-amino-acid chain: Chromosome partition protein MukB (1486 aa).

34-41 (GGNGAGKS) serves as a coordination point for ATP. Coiled coils occupy residues 326-418 (LEAD…QYNQ), 444-480 (LETF…QAYQ), and 509-603 (RHLA…RAPV). Residues 666-783 (PGGSEDQRLN…EVPLFGRAAR (118 aa)) are flexible hinge. Coiled-coil stretches lie at residues 835 to 923 (EAEI…AKLE), 977 to 1115 (EMLS…TAKA), and 1209 to 1266 (VEAI…QNVS).

This sequence belongs to the SMC family. MukB subfamily. As to quaternary structure, homodimerization via its hinge domain. Binds to DNA via its C-terminal region. Interacts, and probably forms a ternary complex, with MukE and MukF via its C-terminal region. The complex formation is stimulated by calcium or magnesium. Interacts with tubulin-related protein FtsZ.

The protein resides in the cytoplasm. It is found in the nucleoid. In terms of biological role, plays a central role in chromosome condensation, segregation and cell cycle progression. Functions as a homodimer, which is essential for chromosome partition. Involved in negative DNA supercoiling in vivo, and by this means organize and compact chromosomes. May achieve or facilitate chromosome segregation by condensation DNA from both sides of a centrally located replisome during cell division. This is Chromosome partition protein MukB from Escherichia coli O6:H1 (strain CFT073 / ATCC 700928 / UPEC).